The following is a 453-amino-acid chain: Allantoinase (453 aa).

The Zn(2+) site is built by His59, His61, Lys146, His186, His242, and Asp315. Lys146 carries the N6-carboxylysine modification.

Belongs to the metallo-dependent hydrolases superfamily. Allantoinase family. As to quaternary structure, homotetramer. Zn(2+) serves as cofactor. Post-translationally, carboxylation allows a single lysine to coordinate two zinc ions.

It catalyses the reaction (S)-allantoin + H2O = allantoate + H(+). The protein operates within nitrogen metabolism; (S)-allantoin degradation; allantoate from (S)-allantoin: step 1/1. In terms of biological role, catalyzes the conversion of allantoin (5-ureidohydantoin) to allantoic acid by hydrolytic cleavage of the five-member hydantoin ring. This chain is Allantoinase, found in Salmonella agona (strain SL483).